The sequence spans 131 residues: Large ribosomal subunit protein bL19 (131 aa).

Belongs to the bacterial ribosomal protein bL19 family.

Functionally, this protein is located at the 30S-50S ribosomal subunit interface and may play a role in the structure and function of the aminoacyl-tRNA binding site. In Rhodopseudomonas palustris (strain BisA53), this protein is Large ribosomal subunit protein bL19.